The following is a 306-amino-acid chain: Ribose-5-phosphate isomerase (306 aa).

The tract at residues 45 to 68 is disordered; sequence GRAQFGVGSTSTSSGDANSVCPAP. Polar residues predominate over residues 51–61; sequence VGSTSTSSGDA. The residue at position 102 (Ser102) is a Phosphoserine.

Belongs to the ribose 5-phosphate isomerase family.

It carries out the reaction aldehydo-D-ribose 5-phosphate = D-ribulose 5-phosphate. Its pathway is carbohydrate degradation; pentose phosphate pathway; D-ribose 5-phosphate from D-ribulose 5-phosphate (non-oxidative stage): step 1/1. This chain is Ribose-5-phosphate isomerase, found in Sus scrofa (Pig).